The following is a 173-amino-acid chain: Putative metal-dependent hydrolase BA_2700/GBAA_2700/BAS2515 (173 aa).

3 residues coordinate Zn(2+): H65, H156, and H160.

Belongs to the metal hydrolase YfiT family. As to quaternary structure, homodimer. Zn(2+) serves as cofactor.

The protein localises to the cytoplasm. Functionally, possible metal-dependent hydrolase. The polypeptide is Putative metal-dependent hydrolase BA_2700/GBAA_2700/BAS2515 (Bacillus anthracis).